A 95-amino-acid chain; its full sequence is Aspartyl/glutamyl-tRNA(Asn/Gln) amidotransferase subunit C (95 aa).

This sequence belongs to the GatC family. Heterotrimer of A, B and C subunits.

It catalyses the reaction L-glutamyl-tRNA(Gln) + L-glutamine + ATP + H2O = L-glutaminyl-tRNA(Gln) + L-glutamate + ADP + phosphate + H(+). The catalysed reaction is L-aspartyl-tRNA(Asn) + L-glutamine + ATP + H2O = L-asparaginyl-tRNA(Asn) + L-glutamate + ADP + phosphate + 2 H(+). Functionally, allows the formation of correctly charged Asn-tRNA(Asn) or Gln-tRNA(Gln) through the transamidation of misacylated Asp-tRNA(Asn) or Glu-tRNA(Gln) in organisms which lack either or both of asparaginyl-tRNA or glutaminyl-tRNA synthetases. The reaction takes place in the presence of glutamine and ATP through an activated phospho-Asp-tRNA(Asn) or phospho-Glu-tRNA(Gln). The polypeptide is Aspartyl/glutamyl-tRNA(Asn/Gln) amidotransferase subunit C (Campylobacter fetus subsp. fetus (strain 82-40)).